The primary structure comprises 424 residues: UDP-N-acetylglucosamine 1-carboxyvinyltransferase (424 aa).

22-23 is a binding site for phosphoenolpyruvate; that stretch reads KN. Arginine 98 contributes to the UDP-N-acetyl-alpha-D-glucosamine binding site. Residue cysteine 122 is the Proton donor of the active site. Cysteine 122 is modified (2-(S-cysteinyl)pyruvic acid O-phosphothioketal). UDP-N-acetyl-alpha-D-glucosamine is bound by residues 127–131, aspartate 312, and isoleucine 334; that span reads RPVDQ.

Belongs to the EPSP synthase family. MurA subfamily.

The protein resides in the cytoplasm. The catalysed reaction is phosphoenolpyruvate + UDP-N-acetyl-alpha-D-glucosamine = UDP-N-acetyl-3-O-(1-carboxyvinyl)-alpha-D-glucosamine + phosphate. The protein operates within cell wall biogenesis; peptidoglycan biosynthesis. Its function is as follows. Cell wall formation. Adds enolpyruvyl to UDP-N-acetylglucosamine. The polypeptide is UDP-N-acetylglucosamine 1-carboxyvinyltransferase (Xanthomonas oryzae pv. oryzae (strain MAFF 311018)).